Consider the following 688-residue polypeptide: Elongation factor G (688 aa).

Residues 8 to 282 (ERTRNIGIMA…AVLDYLPAPT (275 aa)) enclose the tr-type G domain. GTP contacts are provided by residues 17 to 24 (AHIDAGKT), 81 to 85 (DTPGH), and 135 to 138 (NKMD).

This sequence belongs to the TRAFAC class translation factor GTPase superfamily. Classic translation factor GTPase family. EF-G/EF-2 subfamily.

Its subcellular location is the cytoplasm. Functionally, catalyzes the GTP-dependent ribosomal translocation step during translation elongation. During this step, the ribosome changes from the pre-translocational (PRE) to the post-translocational (POST) state as the newly formed A-site-bound peptidyl-tRNA and P-site-bound deacylated tRNA move to the P and E sites, respectively. Catalyzes the coordinated movement of the two tRNA molecules, the mRNA and conformational changes in the ribosome. This is Elongation factor G from Clostridioides difficile (strain 630) (Peptoclostridium difficile).